The following is an 861-amino-acid chain: Putative glutamate--cysteine ligase 2-2 (861 aa).

A carboxylate-amine ligase region spans residues 1-372; it reads MSDARIVAVG…RDVPPAGAAA (372 aa). The interval 373–861 is unknown; it reads ALGSAPAVSA…GSKDTWIPRR (489 aa).

It in the N-terminal section; belongs to the glutamate--cysteine ligase type 2 family. YbdK subfamily.

The catalysed reaction is L-cysteine + L-glutamate + ATP = gamma-L-glutamyl-L-cysteine + ADP + phosphate + H(+). Functionally, ATP-dependent carboxylate-amine ligase which exhibits weak glutamate--cysteine ligase activity. The protein is Putative glutamate--cysteine ligase 2-2 of Frankia casuarinae (strain DSM 45818 / CECT 9043 / HFP020203 / CcI3).